A 185-amino-acid polypeptide reads, in one-letter code: Peptidyl-tRNA hydrolase (185 aa).

Residue Tyr14 coordinates tRNA. The active-site Proton acceptor is His19. 3 residues coordinate tRNA: Tyr65, Asn67, and Asn113.

This sequence belongs to the PTH family. In terms of assembly, monomer.

It localises to the cytoplasm. The enzyme catalyses an N-acyl-L-alpha-aminoacyl-tRNA + H2O = an N-acyl-L-amino acid + a tRNA + H(+). Hydrolyzes ribosome-free peptidyl-tRNAs (with 1 or more amino acids incorporated), which drop off the ribosome during protein synthesis, or as a result of ribosome stalling. Functionally, catalyzes the release of premature peptidyl moieties from peptidyl-tRNA molecules trapped in stalled 50S ribosomal subunits, and thus maintains levels of free tRNAs and 50S ribosomes. The sequence is that of Peptidyl-tRNA hydrolase from Rickettsia bellii (strain RML369-C).